Consider the following 1026-residue polypeptide: Multidrug resistance protein MdtC (1026 aa).

The next 11 helical transmembrane spans lie at I15–A35, E333–L353, L360–C380, L387–L407, V431–L451, F463–P483, L528–P548, L853–S873, L897–V917, P953–G973, and I984–V1004.

It belongs to the resistance-nodulation-cell division (RND) (TC 2.A.6) family. MdtC subfamily. As to quaternary structure, part of a tripartite efflux system composed of MdtA, MdtB and MdtC. MdtC forms a heteromultimer with MdtB.

The protein resides in the cell inner membrane. This chain is Multidrug resistance protein MdtC, found in Salmonella gallinarum (strain 287/91 / NCTC 13346).